We begin with the raw amino-acid sequence, 807 residues long: 1,4-alpha-glucan branching enzyme GlgB (807 aa).

D405 functions as the Nucleophile in the catalytic mechanism. E458 serves as the catalytic Proton donor.

It belongs to the glycosyl hydrolase 13 family. GlgB subfamily. Monomer.

The enzyme catalyses Transfers a segment of a (1-&gt;4)-alpha-D-glucan chain to a primary hydroxy group in a similar glucan chain.. The protein operates within glycan biosynthesis; glycogen biosynthesis. Its function is as follows. Catalyzes the formation of the alpha-1,6-glucosidic linkages in glycogen by scission of a 1,4-alpha-linked oligosaccharide from growing alpha-1,4-glucan chains and the subsequent attachment of the oligosaccharide to the alpha-1,6 position. The sequence is that of 1,4-alpha-glucan branching enzyme GlgB from Histophilus somni (strain 129Pt) (Haemophilus somnus).